Here is a 308-residue protein sequence, read N- to C-terminus: D-alanine--D-alanine ligase (308 aa).

An ATP-grasp domain is found at 104 to 301; sequence KQIWQGSDLP…FDELCVAILE (198 aa). 130–185 is an ATP binding site; it reads IAELGLPVIIKPVHEGSSVGMSKVEKAEDFAAAIEKATQHDAVVMAEKWITGREFT. Mg(2+)-binding residues include D255, E268, and N270.

The protein belongs to the D-alanine--D-alanine ligase family. Requires Mg(2+) as cofactor. Mn(2+) is required as a cofactor.

The protein localises to the cytoplasm. The enzyme catalyses 2 D-alanine + ATP = D-alanyl-D-alanine + ADP + phosphate + H(+). The protein operates within cell wall biogenesis; peptidoglycan biosynthesis. Its function is as follows. Cell wall formation. The polypeptide is D-alanine--D-alanine ligase (Acinetobacter baumannii (strain ACICU)).